The sequence spans 156 residues: Phosphopantetheine adenylyltransferase (156 aa).

Threonine 10 contributes to the substrate binding site. Residues 10-11 (TF) and histidine 18 contribute to the ATP site. Substrate-binding residues include lysine 42, leucine 74, and arginine 88. Residues 89–91 (GLR), glutamate 99, and 124–130 (NAFISSS) contribute to the ATP site.

This sequence belongs to the bacterial CoaD family. As to quaternary structure, homohexamer. The cofactor is Mg(2+).

It is found in the cytoplasm. The catalysed reaction is (R)-4'-phosphopantetheine + ATP + H(+) = 3'-dephospho-CoA + diphosphate. The protein operates within cofactor biosynthesis; coenzyme A biosynthesis; CoA from (R)-pantothenate: step 4/5. Reversibly transfers an adenylyl group from ATP to 4'-phosphopantetheine, yielding dephospho-CoA (dPCoA) and pyrophosphate. This chain is Phosphopantetheine adenylyltransferase, found in Campylobacter concisus (strain 13826).